A 157-amino-acid chain; its full sequence is MRIGQGYDIHRLVEGRPLILGGIRIPYEKGLLGHSDADVLTHAIMDALLGAAALRDIGYYFPPEDERWKGADSILLLQQVVQLVGQEGWRIANVDSVVVAEQPKLKPHIPAIQARLAEAMQLSPKQVGVKATTNEKLGPVGQGEAMAAFAVVLLLER.

The a divalent metal cation site is built by D8 and H10. 4-CDP-2-C-methyl-D-erythritol 2-phosphate-binding positions include 8–10 and 34–35; these read DIH and HS. H42 contributes to the a divalent metal cation binding site. 4-CDP-2-C-methyl-D-erythritol 2-phosphate-binding positions include 56–58 and 132–135; these read DIG and TTNE.

This sequence belongs to the IspF family. In terms of assembly, homotrimer. It depends on a divalent metal cation as a cofactor.

The enzyme catalyses 4-CDP-2-C-methyl-D-erythritol 2-phosphate = 2-C-methyl-D-erythritol 2,4-cyclic diphosphate + CMP. Its pathway is isoprenoid biosynthesis; isopentenyl diphosphate biosynthesis via DXP pathway; isopentenyl diphosphate from 1-deoxy-D-xylulose 5-phosphate: step 4/6. Functionally, involved in the biosynthesis of isopentenyl diphosphate (IPP) and dimethylallyl diphosphate (DMAPP), two major building blocks of isoprenoid compounds. Catalyzes the conversion of 4-diphosphocytidyl-2-C-methyl-D-erythritol 2-phosphate (CDP-ME2P) to 2-C-methyl-D-erythritol 2,4-cyclodiphosphate (ME-CPP) with a corresponding release of cytidine 5-monophosphate (CMP). This Synechococcus sp. (strain JA-3-3Ab) (Cyanobacteria bacterium Yellowstone A-Prime) protein is 2-C-methyl-D-erythritol 2,4-cyclodiphosphate synthase.